We begin with the raw amino-acid sequence, 392 residues long: MDEILKQEMQKELTTRILPYWMERMVDQENGGFYGRITGQEELMPRADKGAILNARILWTYSAAYRLLGREEYKEMANRAKRYLIDHFYDSEFGGVYWSLNYRGEPLDTKKQIYAIGFAIYGLSEFHRATGDPEALMYAVRLFNDIESHSFDGLKNGYCEALTREWNEIADMRLSEKDANERKTMNTHLHILEPYTNLYRVWKDARLERQLYNLIGLFTEKILDKDTSHLQLFFDNDWQSKYPVVSYGHDIEASWLLHEAARVLGDAGLIAEIEPVVKKIAAAASEGLTSDGGMIYEKNLTTGHIDGDYHWWVQAETVVGYYNLFRYFGDRGALQHSIDCWEFIKRHLTDDVHGEWFWSLRADGSLNRDDDKAGFWKCPYHNGRMCIELLGE.

Belongs to the cellobiose 2-epimerase family.

It catalyses the reaction D-cellobiose = beta-D-glucosyl-(1-&gt;4)-D-mannopyranose. In terms of biological role, catalyzes the reversible epimerization of cellobiose to 4-O-beta-D-glucopyranosyl-D-mannose (Glc-Man). Can also epimerize cellotriose to Glc-Glc-Man, cellotetraose to Glc-Glc-Glc-Man, lactose to epilactose, and mannobiose to 4-O-beta-D-mannopyranosyl-D-glucopyranose (Man-Glc). May function as a mannobiose 2-epimerase in vivo and be involved in a mannan catabolic pathway which feeds into glycolysis. In Bacteroides fragilis (strain ATCC 25285 / DSM 2151 / CCUG 4856 / JCM 11019 / LMG 10263 / NCTC 9343 / Onslow / VPI 2553 / EN-2), this protein is Cellobiose 2-epimerase (bfce).